The primary structure comprises 199 residues: Probable molybdenum cofactor guanylyltransferase (199 aa).

Residues 6–8 (LAG), lysine 18, aspartate 65, and aspartate 97 contribute to the GTP site. Position 97 (aspartate 97) interacts with Mg(2+).

It belongs to the MobA family. The cofactor is Mg(2+).

Its subcellular location is the cytoplasm. It carries out the reaction Mo-molybdopterin + GTP + H(+) = Mo-molybdopterin guanine dinucleotide + diphosphate. Its function is as follows. Transfers a GMP moiety from GTP to Mo-molybdopterin (Mo-MPT) cofactor (Moco or molybdenum cofactor) to form Mo-molybdopterin guanine dinucleotide (Mo-MGD) cofactor. The chain is Probable molybdenum cofactor guanylyltransferase from Staphylococcus aureus (strain COL).